We begin with the raw amino-acid sequence, 588 residues long: MGDETVDGIEAKYISGLSTIMVATIQEAKDRISQIEYIFCSQLFPNFQSKSKAFEKVYSEARLAACDTWKDREKSLLDQIEELKVENQQIKSDKEKLAEELGKTASMPLRLTSLQGYIDHLKKKMKSRSKMVGDARDLYYRLVELLQVKGLDELSEDGINMIVSEVKSLKMKTEFLQEELSKKTLVTENLLKKLEYLSTEAADGERKLSSVEEEKQRLKTRLQVFEENVGRLEEILRQKTDEVEEGKTALEVLQGKLKLTEREMLNCKQKIADHEKEKTVVMGKAKDDMQGRHGSYLADLEALRCQSEEKSFELAMEIKKNKELSRTCKKWKSQHTFLCKRFNFTPDSVLHQSSLEDENKEIGQHEKSAISSYLERKHSETAEGADKVRIGTGSSGNNYEKESIIKTVQTPITSISPIVRSPGAAKPPQLSGLKRPASIWRDTRSRQSPGGHDPHDDFLDTPIENVKRVAGEEKHVHDVAKKDDSDDETQDMNPKPSPSRQRIQIAETSKKSFKHVESVRKKAERENLKGIECKQCKKFYDAVHPENEGNGNKSLRCEHHEGVSRHRYRYAPPMTPEGFWNIGFESEM.

Coiled coils occupy residues 64–104 (AACD…LGKT) and 164–281 (SEVK…KTVV). Composition is skewed to basic and acidic residues over residues 377–389 (KHSE…DKVR), 465–484 (NVKR…KKDD), and 508–525 (TSKK…KAER). 2 disordered regions span residues 377-398 (KHSE…SGNN) and 417-525 (PIVR…KAER).

As to expression, basal levels in mitotically dividing cells (meristems), and high levels in endoreduplicating cells (stipules, trichomes) (at protein level).

It localises to the nucleus. Functionally, seems to mediate cell cycle arrest before mitosis in response to DNA damage. Is probably also involved in the transition from mitosis to endoreduplication. The chain is Protein gamma response 1 (GR1) from Arabidopsis thaliana (Mouse-ear cress).